Here is a 693-residue protein sequence, read N- to C-terminus: DNA ligase (693 aa).

NAD(+)-binding positions include 40 to 44, 89 to 90, and E121; these read DSEYD and SL. The active-site N6-AMP-lysine intermediate is the K123. 4 residues coordinate NAD(+): R144, E179, K295, and K319. The Zn(2+) site is built by C413, C416, C431, and C437. In terms of domain architecture, BRCT spans 610–693; it reads REQNILTGKI…AFIKCLEKEV (84 aa).

The protein belongs to the NAD-dependent DNA ligase family. LigA subfamily. It depends on Mg(2+) as a cofactor. The cofactor is Mn(2+).

The catalysed reaction is NAD(+) + (deoxyribonucleotide)n-3'-hydroxyl + 5'-phospho-(deoxyribonucleotide)m = (deoxyribonucleotide)n+m + AMP + beta-nicotinamide D-nucleotide.. DNA ligase that catalyzes the formation of phosphodiester linkages between 5'-phosphoryl and 3'-hydroxyl groups in double-stranded DNA using NAD as a coenzyme and as the energy source for the reaction. It is essential for DNA replication and repair of damaged DNA. The chain is DNA ligase from Rickettsia typhi (strain ATCC VR-144 / Wilmington).